The chain runs to 329 residues: GTP 3',8-cyclase 1 (329 aa).

The Radical SAM core domain occupies 7 to 230; the sequence is GQGRQIDYLR…LDSAEQSGGP (224 aa). Arg-16 is a GTP binding site. Positions 23 and 27 each coordinate [4Fe-4S] cluster. Tyr-29 lines the S-adenosyl-L-methionine pocket. Cys-30 is a binding site for [4Fe-4S] cluster. Arg-65 contributes to the GTP binding site. Residue Gly-69 participates in S-adenosyl-L-methionine binding. Thr-96 lines the GTP pocket. Ser-120 is an S-adenosyl-L-methionine binding site. Lys-157 lines the GTP pocket. Met-191 serves as a coordination point for S-adenosyl-L-methionine. 2 residues coordinate [4Fe-4S] cluster: Cys-255 and Cys-258. A GTP-binding site is contributed by 260 to 262; that stretch reads RLR. Residue Cys-272 participates in [4Fe-4S] cluster binding.

It belongs to the radical SAM superfamily. MoaA family. In terms of assembly, monomer and homodimer. [4Fe-4S] cluster serves as cofactor.

The enzyme catalyses GTP + AH2 + S-adenosyl-L-methionine = (8S)-3',8-cyclo-7,8-dihydroguanosine 5'-triphosphate + 5'-deoxyadenosine + L-methionine + A + H(+). It participates in cofactor biosynthesis; molybdopterin biosynthesis. In terms of biological role, catalyzes the cyclization of GTP to (8S)-3',8-cyclo-7,8-dihydroguanosine 5'-triphosphate. The sequence is that of GTP 3',8-cyclase 1 (moaA1) from Pseudomonas aeruginosa (strain ATCC 15692 / DSM 22644 / CIP 104116 / JCM 14847 / LMG 12228 / 1C / PRS 101 / PAO1).